Here is a 210-residue protein sequence, read N- to C-terminus: Probable GTP-binding protein EngB (210 aa).

One can recognise an EngB-type G domain in the interval 25–199; the sequence is CGIEVAFAGR…RQKLDSWFSE (175 aa). GTP contacts are provided by residues 33–40, 60–64, 78–81, 145–148, and 178–180; these read GRSNAGKS, GRTQL, DLPG, TKAD, and FSS. The Mg(2+) site is built by Ser40 and Thr62.

This sequence belongs to the TRAFAC class TrmE-Era-EngA-EngB-Septin-like GTPase superfamily. EngB GTPase family. Mg(2+) is required as a cofactor.

Functionally, necessary for normal cell division and for the maintenance of normal septation. This chain is Probable GTP-binding protein EngB, found in Salmonella paratyphi C (strain RKS4594).